A 462-amino-acid chain; its full sequence is 3-oxoacyl-[acyl-carrier-protein] synthase I, chloroplastic (462 aa).

Residues methionine 1 to alanine 35 constitute a chloroplast transit peptide. The tract at residues methionine 1–aspartate 45 is disordered. The span at proline 19–proline 29 shows a compositional bias: basic residues. Residues alanine 30–alanine 39 are compositionally biased toward low complexity. Positions arginine 47–proline 459 constitute a Ketosynthase family 3 (KS3) domain. Residues cysteine 213, histidine 353, and histidine 389 each act as for beta-ketoacyl synthase activity in the active site.

This sequence belongs to the thiolase-like superfamily. Beta-ketoacyl-ACP synthases family. In terms of assembly, homodimer.

The protein resides in the plastid. Its subcellular location is the chloroplast. The catalysed reaction is a fatty acyl-[ACP] + malonyl-[ACP] + H(+) = a 3-oxoacyl-[ACP] + holo-[ACP] + CO2. Its function is as follows. Catalyzes the condensation reaction of fatty acid synthesis by the addition to an acyl acceptor of two carbons from malonyl-ACP. Specific for elongation from C-10 to unsaturated C-16 and C-18 fatty acids. The sequence is that of 3-oxoacyl-[acyl-carrier-protein] synthase I, chloroplastic (KAS12) from Hordeum vulgare (Barley).